The chain runs to 680 residues: Probable potassium transport system protein Kup (680 aa).

Helical transmembrane passes span 16–36 (IAGMLITMGVVYGDIGTSPLY), 60–80 (ISLVFWTLMLMTTVKYVLIAL), 103–123 (WLVIPAIIGGATLLADGMLTP), 150–170 (EVIILTVTILSVLFFIQKFGT), 177–197 (FGPIMLIWFTFIGAIGVMNLM), 222–242 (VGILILGSVFLATTGAEALYS), 255–275 (SWPYIAACLVLNYFGQGVWLL), 302–322 (IPAILLATVAAIIASQALISG), 351–371 (LYISIVNWILWAVCLAVVFYF), 380–400 (AYGLAITITMLMTTILLFHYL), 407–427 (WFLAYVVLLFFGAIETIFFIA), and 432–452 (FMHGGYVTVLIAFVILFIMFV).

The protein belongs to the HAK/KUP transporter (TC 2.A.72) family.

Its subcellular location is the cell membrane. The enzyme catalyses K(+)(in) + H(+)(in) = K(+)(out) + H(+)(out). In terms of biological role, transport of potassium into the cell. Likely operates as a K(+):H(+) symporter. This is Probable potassium transport system protein Kup from Latilactobacillus sakei subsp. sakei (strain 23K) (Lactobacillus sakei subsp. sakei).